The primary structure comprises 94 residues: DNA-binding protein HU (94 aa).

This sequence belongs to the bacterial histone-like protein family. Homodimer.

Functionally, histone-like DNA-binding protein which is capable of wrapping DNA to stabilize it, and thus to prevent its denaturation under extreme environmental conditions. This is DNA-binding protein HU (hup) from Helicobacter pylori (strain J99 / ATCC 700824) (Campylobacter pylori J99).